The sequence spans 518 residues: GMP synthase [glutamine-hydrolyzing] (518 aa).

Residues 6 to 200 (RLLIIDFGSQ…FVRLAGFKGD (195 aa)) enclose the Glutamine amidotransferase type-1 domain. Residue Cys84 is the Nucleophile of the active site. Catalysis depends on residues His175 and Glu177. Residues 201–393 (WTMGAYREEA…LGLPESFIGR (193 aa)) enclose the GMPS ATP-PPase domain. ATP is bound at residue 228 to 234 (SGGVDSS).

In terms of assembly, homodimer.

The enzyme catalyses XMP + L-glutamine + ATP + H2O = GMP + L-glutamate + AMP + diphosphate + 2 H(+). It participates in purine metabolism; GMP biosynthesis; GMP from XMP (L-Gln route): step 1/1. Catalyzes the synthesis of GMP from XMP. The protein is GMP synthase [glutamine-hydrolyzing] of Cereibacter sphaeroides (strain ATCC 17029 / ATH 2.4.9) (Rhodobacter sphaeroides).